A 353-amino-acid polypeptide reads, in one-letter code: Methylthioribose-1-phosphate isomerase (353 aa).

Residues 51–53, arginine 94, and glutamine 199 each bind substrate; that span reads RGA. Aspartate 240 functions as the Proton donor in the catalytic mechanism. A substrate-binding site is contributed by 250–251; it reads NK.

It belongs to the eIF-2B alpha/beta/delta subunits family. MtnA subfamily. Homodimer.

The enzyme catalyses 5-(methylsulfanyl)-alpha-D-ribose 1-phosphate = 5-(methylsulfanyl)-D-ribulose 1-phosphate. The protein operates within amino-acid biosynthesis; L-methionine biosynthesis via salvage pathway; L-methionine from S-methyl-5-thio-alpha-D-ribose 1-phosphate: step 1/6. Catalyzes the interconversion of methylthioribose-1-phosphate (MTR-1-P) into methylthioribulose-1-phosphate (MTRu-1-P). In Bacillus pumilus (strain SAFR-032), this protein is Methylthioribose-1-phosphate isomerase.